We begin with the raw amino-acid sequence, 1060 residues long: Protein FAM184B (1060 aa).

Over residues methionine 1–glycine 17 the composition is skewed to polar residues. Positions methionine 1 to alanine 24 are disordered. The stretch at alanine 51 to glutamate 159 forms a coiled coil. Positions leucine 165–proline 191 are disordered. Coiled-coil stretches lie at residues glutamate 192 to methionine 333 and methionine 402 to glutamate 502. Disordered regions lie at residues glutamine 532–threonine 566, threonine 681–histidine 700, and glycine 762–glutamate 803. Basic and acidic residues-rich tracts occupy residues leucine 536–alanine 554, threonine 681–serine 690, and aspartate 773–glycine 785. Residues leucine 584–glutamine 769 adopt a coiled-coil conformation. A coiled-coil region spans residues glycine 806 to histidine 934. 2 stretches are compositionally biased toward polar residues: residues serine 994–proline 1009 and lysine 1018–arginine 1030. Residues serine 994–histidine 1050 are disordered.

This sequence belongs to the FAM184 family.

The polypeptide is Protein FAM184B (FAM184B) (Homo sapiens (Human)).